The chain runs to 335 residues: [Citrate [pro-3S]-lyase] ligase (335 aa).

Residues 1–131 (MQFERISTEQ…SATRLQKQCS (131 aa)) form the N-acetyltransferase domain.

The catalysed reaction is holo-[citrate lyase ACP] + acetate + ATP = acetyl-[citrate lyase ACP] + AMP + diphosphate. Acetylation of prosthetic group (2-(5''-phosphoribosyl)-3'-dephosphocoenzyme-A) of the gamma subunit of citrate lyase. The polypeptide is [Citrate [pro-3S]-lyase] ligase (citC) (Haemophilus influenzae (strain ATCC 51907 / DSM 11121 / KW20 / Rd)).